A 251-amino-acid chain; its full sequence is Eukaryotic translation initiation factor 3 subunit K (251 aa).

The PCI domain occupies 46 to 224 (FDCYANLALL…VKVPTNKENE (179 aa)).

Belongs to the eIF-3 subunit K family. In terms of assembly, component of the eukaryotic translation initiation factor 3 (eIF-3) complex.

The protein localises to the cytoplasm. In terms of biological role, component of the eukaryotic translation initiation factor 3 (eIF-3) complex, which is involved in protein synthesis of a specialized repertoire of mRNAs and, together with other initiation factors, stimulates binding of mRNA and methionyl-tRNAi to the 40S ribosome. The eIF-3 complex specifically targets and initiates translation of a subset of mRNAs involved in cell proliferation. In Aspergillus oryzae (strain ATCC 42149 / RIB 40) (Yellow koji mold), this protein is Eukaryotic translation initiation factor 3 subunit K.